The following is a 189-amino-acid chain: UPF0301 protein RMA_0049 (189 aa).

It belongs to the UPF0301 (AlgH) family.

The sequence is that of UPF0301 protein RMA_0049 from Rickettsia massiliae (strain Mtu5).